The primary structure comprises 703 residues: MTFNEKCVEAQVGNMNVKISTGKMAKQASGAVVISSGDTMVLVTVVGTKEAKPGQDFFPLTVNYTEKTYAGGKIPGSFFKREGRPSEDETLICRLIDRPIRPLFPESYLCDTQVMATVISAEEDHDPAILSMIGASAALMISDIPFEGPIAGVKVGRVDGKLIANPSAEQLKLSDLEIVVAAGKDAIFMVEGEADFVSEEDLLEAVFFAKDAVQGILAAQEELARQVGVAKREVAPLVVDEALKAKVKALAFDRIAQAFKIKAKQERYAAVAQIKEEVVAALAEEFEGRDKEIKGFIGDIEYDRMRHDVLETGIRIDGRDTKTVRPIAIEAGLLPRAHGSTLFTRGETQVLAAATLGTSQDEQRMDSLYGEYRKKFMLHYNFPPFSVGETSFRLAPGRREIGHGMLAERAISAILPNHDDFPYTIRIVAETLESNGSSSMATVCGGCLSLMDAGVPVKAPVAGIAMGLIKEGEKVAILTDILGDEDHLGDMDFKVAGSADGVTALQMDIKIGGVSKEIMQQALKQAKEGRLHILGKMAQCLAAPREEMSAFAPRITTIWIKPDRIRDVIGTGGKTIRSITEATGVMIDIDSDNSGKINIASSDKAACDAAIQMIRGLTDEVEEGKLYMGTVKKIMEFGAFVEVLPGTDGLVHISELDETRVKNVTDILNEGDKVLVKCIGVDKQGKIKLSRKAALGQSLEEKD.

The Mg(2+) site is built by Asp486 and Asp492. Residues Pro553 to Ile614 form the KH domain. The S1 motif domain occupies Gly624–Lys692.

Belongs to the polyribonucleotide nucleotidyltransferase family. Mg(2+) serves as cofactor.

It is found in the cytoplasm. The enzyme catalyses RNA(n+1) + phosphate = RNA(n) + a ribonucleoside 5'-diphosphate. Its function is as follows. Involved in mRNA degradation. Catalyzes the phosphorolysis of single-stranded polyribonucleotides processively in the 3'- to 5'-direction. The chain is Polyribonucleotide nucleotidyltransferase from Trichlorobacter lovleyi (strain ATCC BAA-1151 / DSM 17278 / SZ) (Geobacter lovleyi).